Consider the following 720-residue polypeptide: Engulfment and cell motility protein 2 (720 aa).

Tyr48 carries the phosphotyrosine modification. The ELMO domain occupies 311–485 (AQRDIIFELR…VVREQITRAL (175 aa)). Phosphoserine is present on Ser503. The 122-residue stretch at 553–674 (SSFRKIGNRR…LLGKDMSSEL (122 aa)) folds into the PH domain. Positions 700 to 707 (PEAPPPIP) match the SH3-binding motif. Phosphotyrosine is present on Tyr717.

In terms of assembly, interacts with the SH3-domain of DOCK1 via its SH3-binding site. Probably part of a complex with DOCK1 and RAC1. Probably part of a complex with DOCK1 and CRK isoform CRK-II. Interacts with ARHGEF16, DOCK4 and EPHA2; mediates activation of RAC1 by EPHA2. Interacts with ADGRB3. Interacts with AUTS2; the interaction is direct. As to expression, widely expressed, with a higher expression in skeletal muscle, kidney and placenta.

It localises to the cytoplasm. It is found in the cytosol. Its subcellular location is the membrane. Involved in cytoskeletal rearrangements required for phagocytosis of apoptotic cells and cell motility. Acts in association with DOCK1 and CRK. Was initially proposed to be required in complex with DOCK1 to activate Rac Rho small GTPases. May enhance the guanine nucleotide exchange factor (GEF) activity of DOCK1. The chain is Engulfment and cell motility protein 2 (ELMO2) from Homo sapiens (Human).